We begin with the raw amino-acid sequence, 907 residues long: Alanine--tRNA ligase (907 aa).

Residues His-581, His-585, Cys-683, and His-687 each coordinate Zn(2+).

Belongs to the class-II aminoacyl-tRNA synthetase family. Requires Zn(2+) as cofactor.

Its subcellular location is the cytoplasm. It carries out the reaction tRNA(Ala) + L-alanine + ATP = L-alanyl-tRNA(Ala) + AMP + diphosphate. Functionally, catalyzes the attachment of alanine to tRNA(Ala) in a two-step reaction: alanine is first activated by ATP to form Ala-AMP and then transferred to the acceptor end of tRNA(Ala). Also edits incorrectly charged Ser-tRNA(Ala) and Gly-tRNA(Ala) via its editing domain. This Bdellovibrio bacteriovorus (strain ATCC 15356 / DSM 50701 / NCIMB 9529 / HD100) protein is Alanine--tRNA ligase.